A 332-amino-acid chain; its full sequence is MDSTSSLHGSSLHRPSTEQTRTDFSWDGINLSMEDTTSILPKLKRNSNAYGIGALAKSSFSGISRSMKDHVTKPTAMGQGRVAHMIEWQGWGKAPTIQPQHSHEAVRRDTDAYSDLSDGEKEARFLAGVMEQFAISEATLMAWSSMDGEDMSVNSTQEPLDCNYSDNYQELMESQDALAQAPMDGWPHSYVSQGMYCLGSSDAWEASDQSLIASPATGSYLGPAFDDSQPSLHDMGPSQPASGYSAQEPPPLLGVDTDWASEVGGVELARGPVEEEKRPLAPEEEEDAGCRDLESLSPREDPEMSTALSRKVSDVTSSGVQSFDEEEGDANN.

The disordered stretch occupies residues 1-22 (MDSTSSLHGSSLHRPSTEQTRT). A Phosphoserine modification is found at Ser-47. The disordered stretch occupies residues 95–114 (PTIQPQHSHEAVRRDTDAYS). Basic and acidic residues predominate over residues 101–111 (HSHEAVRRDTD). Phosphoserine is present on residues Ser-114 and Ser-117. Positions 221-332 (LGPAFDDSQP…FDEEEGDANN (112 aa)) are disordered. Basic and acidic residues-rich tracts occupy residues 272–281 (PVEEEKRPLA) and 288–302 (AGCRDLESLSPREDP). Residues Ser-295, Ser-297, and Ser-313 each carry the phosphoserine modification. Thr-316 carries the post-translational modification Phosphothreonine. Ser-317, Ser-318, and Ser-322 each carry phosphoserine. The segment covering 323–332 (FDEEEGDANN) has biased composition (acidic residues).

It belongs to the FAM131 family.

This is Protein FAM131B (Fam131b) from Mus musculus (Mouse).